A 555-amino-acid polypeptide reads, in one-letter code: Neurofilament light polypeptide (555 aa).

An N-acetylserine modification is found at Ser2. The tract at residues 2–93 is head; sequence SSFSYEPYYS…KSIRTQEKAQ (92 aa). Arg23 is modified (asymmetric dimethylarginine; alternate). Residue Arg23 is modified to Omega-N-methylarginine; alternate. Omega-N-methylarginine is present on Arg30. Tyr43 carries the phosphotyrosine modification. Residues Ser56, Ser67, and Ser103 each carry the phosphoserine modification. The IF rod domain maps to 90–401; that stretch reads EKAQLQDLND…KLLEGEETRL (312 aa). The coil 1A stretch occupies residues 94-125; sequence LQDLNDRFASFIERVHELEQQNKVLEAELLVL. The interval 126–138 is linker 1; the sequence is RQKHSEPSRFRAL. A coil 1B region spans residues 139–234; the sequence is YEQEIRDLRL…KVHEEEIAEL (96 aa). Residues 235-253 are linker 12; the sequence is QAQIQYAQISVEMDVSSKP. Positions 254-272 are coil 2A; it reads DLSAALKDIRAQYEKLAAK. Residues 273-281 form a linker 2 region; sequence NMQNAEEWF. A coil 2B region spans residues 282–397; it reads KSRFTVLTES…AAYRKLLEGE (116 aa). The tract at residues 398–444 is tail, subdomain A; it reads ETRLSFTSVGSLTTGYTQSSQVFGRSAYGGLQTSSYLMSARSFPSYY. Positions 398 to 555 are tail; the sequence is ETRLSFTSVG…GEEQATKKKD (158 aa). Residues 445 to 555 are tail, subdomain B (acidic); it reads TSHVQEEQIE…GEEQATKKKD (111 aa). The segment at 463–555 is disordered; the sequence is KAEEAKDEPP…GEEQATKKKD (93 aa). Positions 472-540 are enriched in acidic residues; it reads PSEGEAEEEE…ETKEAEEEEK (69 aa). Ser473 is modified (phosphoserine). Position 532 is a phosphothreonine (Thr532). The segment covering 541 to 555 has biased composition (basic and acidic residues); it reads KDEGAGEEQATKKKD.

It belongs to the intermediate filament family. Forms homodimers (in vitro). Forms heterodimers with NEFH or NEFM; which can further hetero-oligomerize (in vitro). Forms heterodimers with INA (in vitro). Interacts with ARHGEF28. Interacts with TRIM2. Post-translationally, O-glycosylated. In terms of processing, phosphorylated in the head and rod regions by the PKC kinase PKN1, leading to the inhibition of polymerization. Ubiquitinated in the presence of TRIM2 and UBE2D1.

It localises to the cell projection. The protein localises to the axon. Its subcellular location is the cytoplasm. The protein resides in the cytoskeleton. Neurofilaments usually contain three intermediate filament proteins: NEFL, NEFM, and NEFH which are involved in the maintenance of neuronal caliber. May additionally cooperate with the neuronal intermediate filament proteins PRPH and INA to form neuronal filamentous networks. In Bos taurus (Bovine), this protein is Neurofilament light polypeptide (NEFL).